A 200-amino-acid chain; its full sequence is NADH-quinone oxidoreductase subunit C (200 aa).

Belongs to the complex I 30 kDa subunit family. In terms of assembly, NDH-1 is composed of 14 different subunits. Subunits NuoB, C, D, E, F, and G constitute the peripheral sector of the complex.

It is found in the cell inner membrane. The catalysed reaction is a quinone + NADH + 5 H(+)(in) = a quinol + NAD(+) + 4 H(+)(out). Its function is as follows. NDH-1 shuttles electrons from NADH, via FMN and iron-sulfur (Fe-S) centers, to quinones in the respiratory chain. The immediate electron acceptor for the enzyme in this species is believed to be ubiquinone. Couples the redox reaction to proton translocation (for every two electrons transferred, four hydrogen ions are translocated across the cytoplasmic membrane), and thus conserves the redox energy in a proton gradient. The protein is NADH-quinone oxidoreductase subunit C of Ralstonia nicotianae (strain ATCC BAA-1114 / GMI1000) (Ralstonia solanacearum).